Consider the following 184-residue polypeptide: Prolyl-tRNA synthetase associated domain-containing protein 1 (184 aa).

Belongs to the PRORSD1 family.

The chain is Prolyl-tRNA synthetase associated domain-containing protein 1 (Prorsd1) from Danio rerio (Zebrafish).